The sequence spans 187 residues: Capsid protein VP10 (187 aa).

A disulfide bond links Cys45 and Cys51.

It is found in the virion. VP10 self-assembles, together with capsid protein VP4, to form an icosahedral caspid of 87 nm in diameter, with a T=43 symmetry and composed of 420 hexamers and 12 pentamers. VP4 proteins arrange into hexons, while VP10 proteins form the pentameric densities located at the 5-fold axes in the virion. The stoichiometry of VP4:VP10 is 42:1. This is Capsid protein VP10 from Sulfolobus polyhedral virus 1 (SPV1).